We begin with the raw amino-acid sequence, 2391 residues long: Filaggrin-2 (2391 aa).

Residues 1–81 (MTDLLRSVVT…TEFLLMIFKL (81 aa)) are S-100-like. 2 consecutive EF-hand domains span residues 8 to 43 (VVTV…ELHP) and 49 to 84 (DDPD…LTMA). The Ca(2+) site is built by D62, D64, D66, R68, and E73. Disordered stretches follow at residues 96-275 (ASGS…DSGR), 349-369 (SYSQ…CGGQ), and 406-2391 (NSSS…LSRH). Residues 98-107 (GSKKHRRGHR) are compositionally biased toward basic residues. A compositionally biased stretch (acidic residues) spans 111-121 (EESETEEDEED). Residues 149–163 (GTVKCRHGSNSRRLG) are compositionally biased toward basic residues. Polar residues predominate over residues 166 to 176 (GNLSSSGNQEG). Residues 193 to 209 (GKDRHGSSSVELRERIN) are compositionally biased toward basic and acidic residues. The Filaggrin 1 repeat unit spans residues 245–289 (ETSGHESNSTQSRIREQKLGSSCSGSGDSGRRSHACGYSNSSGCG). Composition is skewed to polar residues over residues 420–442 (GSGS…SSGF) and 449–476 (SGQT…SGKT). The stretch at 421–466 (SGSSQSTSFEQHGTGLSQSSGFEQHVCGSGQTCGQHESTSSQSLGY) is one Filaggrin 2 repeat. A compositionally biased stretch (gly residues) spans 480 to 507 (GQHGSGSGQSSGFGQCGSGSGQSSGFGQ). Residues 508–562 (HGSVSGQSSGFGQHGSVSGQSSGFGQHESRSRQSSYGQHGSGSSQSSGYGQYGSR) show a composition bias toward low complexity. Gly residues predominate over residues 568–604 (GQHGLGSGQSTGFGQYGSGSGQSSGFGQHGSGSGQSS). Over residues 605–655 (GFGQHESRSGQSSYGQHSSGSSQSSGYGQHGSRQTSGFGQHGSGSSQSTGF) the composition is skewed to low complexity. The span at 656–666 (GQYGSGSGQSS) shows a compositional bias: gly residues. Residues 667–734 (GFGQHVSGSG…SSGQSSSFGQ (68 aa)) show a composition bias toward low complexity. Over residues 735 to 756 (HGSGSGQSSGFGQHGSGSGQSS) the composition is skewed to gly residues. The span at 757 to 807 (GFGQHESRSGQSSYGQHSSGSSQSSGYGQHGSRQTSGFGQHGSGSSQSTGF) shows a compositional bias: low complexity. Gly residues predominate over residues 808-831 (GQYGSGSGQSAGFGQHGSGSGQSS). The segment covering 832–884 (GFGQHESRSHQSSYGQHGSGSSQSSGYGQHGSSSGQTSGFGQHRSSSGQYSGF) has biased composition (low complexity). The segment covering 885–908 (GQHGSGSGQSSGFGQHGTGSGQYS) has biased composition (gly residues). Residues 918–956 (HQSSYGQHGSGSSQSSGYGQHGSSSGQTFGFGQHRSGSG) are compositionally biased toward low complexity. Over residues 957 to 972 (QSSGFGQHGSGSGQSS) the composition is skewed to gly residues. Composition is skewed to low complexity over residues 973–982 (GFGQHESGSG) and 994–1027 (SSQS…GFGQ). A Filaggrin 3 repeat occupies 1019 to 1051 (SGQTTGFGQHRSSSGQYSGFGQHGSGSDQSSGF). The span at 1052 to 1062 (GQHGTGSGQSS) shows a compositional bias: gly residues. Residues 1063–1098 (GFGQYESRSRQSSYGQHGSGSSQSSGYGQHGSNSGQ) are compositionally biased toward low complexity. One copy of the Filaggrin 4 repeat lies at 1097–1141 (GQTSGFGQHRPGSGQSSGFGQYGSGSGQSSGFGQHGSGTGKSSGF). Residues 1111-1137 (QSSGFGQYGSGSGQSSGFGQHGSGTGK) show a composition bias toward gly residues. Low complexity predominate over residues 1148–1174 (SGQSSYGQHGTGSSQSSGCGQHESGSG). Positions 1175-1198 (PTTSFGQHVSGSDNFSSSGQHISD) are enriched in polar residues. The span at 1206–1220 (GQYGSGSGQSTGLGQ) shows a compositional bias: gly residues. A compositionally biased stretch (polar residues) spans 1226–1249 (VESGSTVHGRQETTHGQTINTTRH). Low complexity predominate over residues 1250–1263 (SQSGQGQSTQTGSR). A Phosphoserine modification is found at S1276. The span at 1329–1343 (HGQSTQTGSRTSGRQ) shows a compositional bias: polar residues. Residues 1346–1355 (SHSDATDSEV) show a composition bias toward basic and acidic residues. A compositionally biased stretch (polar residues) spans 1366–1377 (QEQTHSQAGSQH). Residues 1378-1390 (GESESTVHERHET) are compositionally biased toward basic and acidic residues. The span at 1406–1416 (HGQSTQRGSRT) shows a compositional bias: low complexity. Phosphoserine is present on residues S1427 and S1428. The segment covering 1439–1459 (RPQSQEQTHGQAGSQHGESGS) has biased composition (polar residues). A Filaggrin 5 repeat occupies 1455–1510 (GESGSTVHGRHGTTHGQTGDTTRHAHYHHGKSTQRGSSTTGRRGSGHSESSDSEVH). Over residues 1487–1496 (TQRGSSTTGR) the composition is skewed to low complexity. Phosphoserine is present on residues S1504 and S1505. Positions 1510–1529 (HSGGSHTHSGHTHGQSGSQH) are enriched in low complexity. Residues 1544–1559 (HGQTGDTTRHSYSGHE) are compositionally biased toward polar residues. Residues 1560-1572 (QTTQTGSRTTGRQ) show a composition bias toward low complexity. Basic and acidic residues-rich tracts occupy residues 1575 to 1584 (SHSESTDSEV) and 1605 to 1618 (QHEE…ERHG). S1579 carries the post-translational modification Phosphoserine. The stretch at 1607–1662 (EEPEFTVHERHGTTHGQIGDTTGHSHSGHGQSTQRGSRTTGRQRSSHSESSDSEVH) is one Filaggrin 6 repeat. A compositionally biased stretch (low complexity) spans 1627–1649 (TTGHSHSGHGQSTQRGSRTTGRQ). Over residues 1652 to 1661 (SHSESSDSEV) the composition is skewed to basic and acidic residues. Phosphoserine occurs at positions 1656 and 1657. Low complexity-rich tracts occupy residues 1662-1686 (HSGV…QSES) and 1711-1720 (GLTTQTGSRT). Over residues 1755 to 1768 (QHGESESIVHERHG) the composition is skewed to basic and acidic residues. Residues 1757 to 1812 (GESESIVHERHGTIHGQTGDTTRHAHSGHGQSTQTGSRTTGRRSSGHSEYSDSEGH) form a Filaggrin 7 repeat. Residues 1784–1795 (GHGQSTQTGSRT) show a composition bias toward low complexity. A phosphoserine mark is found at S1800 and S1807. A compositionally biased stretch (basic and acidic residues) spans 1834–1845 (GESESIVDERHG). The span at 1849 to 1873 (GQTGDTSGHSQSGHGQSTQSGSSTT) shows a compositional bias: low complexity. Residues 1879–1888 (GHSESSDSEV) show a composition bias toward basic and acidic residues. Phosphoserine is present on residues S1883, S1884, and S1959. Filaggrin repeat units follow at residues 1928–1964 (DTTE…SEGP) and 1984–2039 (PESG…SEGH). Low complexity-rich tracts occupy residues 1963-1982 (GPSG…AGSH) and 2013-2022 (GQSTQRGSRT). Position 2034 is a phosphoserine (S2034). Low complexity-rich tracts occupy residues 2039 to 2059 (HSGV…SQHG), 2114 to 2125 (HSGVSHTHSGHT), and 2162 to 2176 (HGQS…TGRQ). Residues 2134 to 2189 (GESGSAIHGRQGTIHGQTGDTTRHGQSGHGQSTQTGSRTTGRQRSSHSESSDSEVH) form a Filaggrin 10 repeat. A compositionally biased stretch (basic and acidic residues) spans 2179-2190 (SHSESSDSEVHS). Low complexity-rich tracts occupy residues 2201–2211 (HSQAGSRHGQS), 2219–2228 (QGTTHGQTGD), and 2238–2247 (GQSTQRGSRT). Residues 2273–2288 (GHIQGQAGSQQRQPGS) are compositionally biased toward polar residues. Residues 2320–2331 (SRSSRASHFQSH) show a composition bias toward low complexity. The span at 2367–2391 (SRKSISNSHLSWSTDSTANKQLSRH) shows a compositional bias: polar residues.

This sequence belongs to the S100-fused protein family. The protein in the N-terminal section; belongs to the S-100 family. Post-translationally, deiminated by PADI1, PADI2 or PADI3 in vitro. The deiminated form is degraded by calpain-1/CAPN1 more quickly and into shorter peptides than the intact protein. May be processed by calpain-1/CAPN1 in the uppermost epidermal layers. As to expression, expressed in skin, thymus, stomach and placenta, but not detected in heart, brain, liver, lung, bone marrow, small intestine, spleen, prostate, colon, adrenal gland, kidney, pancreas, mammary gland, bladder, thyroid, salivary gland and trachea. Weakly expressed in esophagus, tonsils and testis (at protein level). In the skin, strongly expressed in the upper stratum granulosum and lower stratum corneum, but not detected in the upper stratum corneum (at protein level). In scalp hair follicles, mainly restricted within the granular and cornified cells surrounding the infundibular outer root sheath, with weak expression in central and proximal outer root sheath (at protein level). Tends to be down-regulated in sporiatic lesions compared to non-lesional skin inthe same patients.

The protein resides in the cytoplasm. It is found in the cytoplasmic granule. Its function is as follows. Essential for normal cell-cell adhesion in the cornified cell layers. Important for proper integrity and mechanical strength of the stratum corneum of the epidermis. The sequence is that of Filaggrin-2 (FLG2) from Homo sapiens (Human).